Here is a 152-residue protein sequence, read N- to C-terminus: MAPARKGKAKEEQAVVSLGPQAKEGELIFGVAHIFASFNDTFVHITDISGRETIVRVTGGMKVKADRDESSPYAAMLAAQDVADRCKQLGINALHIKLRATGGTRTKTPGPGAQSALRALARAGMKIGRIEDVTPIPSDCTRRKGGRRGRRL.

This sequence belongs to the universal ribosomal protein uS11 family. Component of the small ribosomal subunit. Part of the small subunit (SSU) processome, composed of more than 70 proteins and the RNA chaperone small nucleolar RNA (snoRNA) U3.

It is found in the cytoplasm. The protein localises to the nucleus. The protein resides in the nucleolus. In terms of biological role, component of the small ribosomal subunit. The ribosome is a large ribonucleoprotein complex responsible for the synthesis of proteins in the cell. Part of the small subunit (SSU) processome, first precursor of the small eukaryotic ribosomal subunit. During the assembly of the SSU processome in the nucleolus, many ribosome biogenesis factors, an RNA chaperone and ribosomal proteins associate with the nascent pre-rRNA and work in concert to generate RNA folding, modifications, rearrangements and cleavage as well as targeted degradation of pre-ribosomal RNA by the RNA exosome. The chain is Small ribosomal subunit protein uS11 (rps-14) from Caenorhabditis elegans.